The primary structure comprises 150 residues: Alkaline nuclease (150 aa).

This sequence belongs to the baculo-herpesviridae alkaline nuclease family.

The chain is Alkaline nuclease (UL12) from Suid herpesvirus 1 (strain NIA-3) (SuHV-1).